The following is a 415-amino-acid chain: Styrene monooxygenase StyA (415 aa).

Belongs to the StyA family. In terms of assembly, homodimer. A direct interaction with the monooxygenase reductase component StyB seems not to be necessary for the enzymatic activity.

It catalyses the reaction styrene + FADH2 + O2 = (S)-styrene oxide + FAD + H2O + H(+). The protein operates within aromatic compound metabolism. In terms of biological role, styrene monooxygenase which catalyzes the first step in the aerobic styrene degradation pathway by enantioselective epoxidation of the vinyl side chain. In a two-component system, a reductase utilizes NADH to reduce FAD, which is then transferred to the oxygenase; the electron transfer is proposed to occur via a diffusing flavin. This is Styrene monooxygenase StyA (styA) from Pseudomonas sp.